A 234-amino-acid polypeptide reads, in one-letter code: MLIRNYRGLLGTKLGMTQVWDANNRVVPVTVIKAGPNVVTQVKTPDSDGYSAVQLGYGEIDPRKINKPARGHFATSGVTPRRHLVELRTADAGNYRPGQELTGEVFAEGTVVDVTGTSKGKGFAGVMKRHGFKGLGAGHGVERKHRSPGSVGGCATPGRVFKGLRMAGRMGHARTTTPGLTIHAVDTERGFLLVKGAIPGPDGGLVFVRSAAKRPAPEAIAPAATVGAGEEVSA.

A disordered region spans residues 137 to 156 (AGHGVERKHRSPGSVGGCAT).

It belongs to the universal ribosomal protein uL3 family. In terms of assembly, part of the 50S ribosomal subunit. Forms a cluster with proteins L14 and L19.

Functionally, one of the primary rRNA binding proteins, it binds directly near the 3'-end of the 23S rRNA, where it nucleates assembly of the 50S subunit. The polypeptide is Large ribosomal subunit protein uL3 (Frankia alni (strain DSM 45986 / CECT 9034 / ACN14a)).